A 396-amino-acid polypeptide reads, in one-letter code: Elongation factor Tu (396 aa).

The region spanning 10–206 (KPHVNVGTIG…ALDTYIPTPE (197 aa)) is the tr-type G domain. The segment at 19–26 (GHVDHGKT) is G1. A GTP-binding site is contributed by 19–26 (GHVDHGKT). T26 contacts Mg(2+). The interval 60–64 (GITIN) is G2. The tract at residues 81–84 (DCPG) is G3. GTP is bound by residues 81–85 (DCPGH) and 136–139 (NKCD). The G4 stretch occupies residues 136–139 (NKCD). Residues 174–176 (SAK) are G5.

Belongs to the TRAFAC class translation factor GTPase superfamily. Classic translation factor GTPase family. EF-Tu/EF-1A subfamily. In terms of assembly, monomer.

The protein localises to the cytoplasm. The catalysed reaction is GTP + H2O = GDP + phosphate + H(+). Its function is as follows. GTP hydrolase that promotes the GTP-dependent binding of aminoacyl-tRNA to the A-site of ribosomes during protein biosynthesis. The polypeptide is Elongation factor Tu (Cupriavidus pinatubonensis (strain JMP 134 / LMG 1197) (Cupriavidus necator (strain JMP 134))).